The following is a 116-amino-acid chain: Ribonuclease P protein component (116 aa).

This sequence belongs to the RnpA family. Consists of a catalytic RNA component (M1 or rnpB) and a protein subunit.

The catalysed reaction is Endonucleolytic cleavage of RNA, removing 5'-extranucleotides from tRNA precursor.. Functionally, RNaseP catalyzes the removal of the 5'-leader sequence from pre-tRNA to produce the mature 5'-terminus. It can also cleave other RNA substrates such as 4.5S RNA. The protein component plays an auxiliary but essential role in vivo by binding to the 5'-leader sequence and broadening the substrate specificity of the ribozyme. The chain is Ribonuclease P protein component from Citrifermentans bemidjiense (strain ATCC BAA-1014 / DSM 16622 / JCM 12645 / Bem) (Geobacter bemidjiensis).